The following is a 311-amino-acid chain: Cytosolic Fe-S cluster assembly factor Nubp1 homolog (311 aa).

Residues cysteine 9, cysteine 23, cysteine 26, and cysteine 32 each coordinate [4Fe-4S] cluster. 63 to 70 serves as a coordination point for ATP; it reads GKGGVGKS. Residues cysteine 240 and cysteine 243 each contribute to the [4Fe-4S] cluster site.

This sequence belongs to the Mrp/NBP35 ATP-binding proteins family. NUBP1/NBP35 subfamily. In terms of assembly, heterotetramer of 2 Nubp1 and 2 Nubp2 chains. The cofactor is [4Fe-4S] cluster.

The protein localises to the cytoplasm. Functionally, component of the cytosolic iron-sulfur (Fe/S) protein assembly (CIA) machinery. Required for maturation of extramitochondrial Fe-S proteins. The Nubp1-Nubp2 heterotetramer forms a Fe-S scaffold complex, mediating the de novo assembly of an Fe-S cluster and its transfer to target apoproteins. The polypeptide is Cytosolic Fe-S cluster assembly factor Nubp1 homolog (Drosophila yakuba (Fruit fly)).